A 345-amino-acid chain; its full sequence is Olfactory receptor 11G2 (345 aa).

Residues 1–62 (MHFLSQNDLN…LGFPCPREGQ (62 aa)) lie on the Extracellular side of the membrane. Asn-43 carries N-linked (GlcNAc...) asparagine glycosylation. The chain crosses the membrane as a helical span at residues 63–83 (ILLFVLFTVVYLLTLMGNGSI). Residues 84–92 (ICAVHWDQR) lie on the Cytoplasmic side of the membrane. A helical membrane pass occupies residues 93 to 113 (LHAPMYILLANFSFLEICYVT). Topologically, residues 114 to 135 (STVPSMLANFLSDTKIISFSGC) are extracellular. Cys-135 and Cys-217 are disulfide-bonded. The helical transmembrane segment at 136–156 (FLQFYFFFSLGSTECFFLAVM) threads the bilayer. At 157 to 181 (AFDRYLAICRPLRYPTIMTRRLCTN) the chain is on the cytoplasmic side. Residues 182 to 202 (LVVNCWVLGFIWFLIPIVNIS) traverse the membrane as a helical segment. The Extracellular segment spans residues 203–241 (QMSFCGSRIIDHFLCDPAPLLTLTCKKGPVIELVFSVLS). The helical transmembrane segment at 242–264 (PLPVFMLFLFIVGSYALVVRAVL) threads the bilayer. The Cytoplasmic portion of the chain corresponds to 265-275 (RVPSAAGRRKA). Residues 276 to 296 (FSTCGSHLAVVSLFYGSVLVM) traverse the membrane as a helical segment. Over 297 to 309 (YGSPPSKNEAGKQ) the chain is Extracellular. A helical membrane pass occupies residues 310-330 (KTVTLFYSVVTPLLNPVIYSL). Residues 331–345 (RNKDMRKALKKFWGT) are Cytoplasmic-facing.

Belongs to the G-protein coupled receptor 1 family.

The protein resides in the cell membrane. Odorant receptor. The protein is Olfactory receptor 11G2 (OR11G2) of Homo sapiens (Human).